Reading from the N-terminus, the 455-residue chain is 23S rRNA (uracil(1939)-C(5))-methyltransferase RlmD (455 aa).

One can recognise a TRAM domain in the interval 12–70; it reads SKQLSAKLSLSVTQLDHLGAGIAQHQGKIVFIPGVLPGETATVQFVEQKKSYAKAKLIS. C83, C89, C92, and C174 together coordinate [4Fe-4S] cluster. S-adenosyl-L-methionine is bound by residues Q288, F317, N322, E338, D365, and D385. Residue C411 is the Nucleophile of the active site.

It belongs to the class I-like SAM-binding methyltransferase superfamily. RNA M5U methyltransferase family. RlmD subfamily.

The enzyme catalyses uridine(1939) in 23S rRNA + S-adenosyl-L-methionine = 5-methyluridine(1939) in 23S rRNA + S-adenosyl-L-homocysteine + H(+). In terms of biological role, catalyzes the formation of 5-methyl-uridine at position 1939 (m5U1939) in 23S rRNA. This is 23S rRNA (uracil(1939)-C(5))-methyltransferase RlmD from Shewanella frigidimarina (strain NCIMB 400).